Consider the following 469-residue polypeptide: Transcriptional coactivator YAP1 (469 aa).

Residues 1–21 are compositionally biased toward pro residues; that stretch reads MEPAQQPPPQPAPQGPAPPSV. The tract at residues 1–47 is disordered; sequence MEPAQQPPPQPAPQGPAPPSVSPAGTPAAPPAPPAGHQVVHVRGDSE. Ser46 bears the Phosphoserine mark. Position 48 is a phosphothreonine (Thr48). A coiled-coil region spans residues 71 to 85; the sequence is MRLRKLPDSFFKPPE. An N6-lactoyllysine modification is found at Lys75. Residues 76-99 are disordered; that stretch reads LPDSFFKPPEPKSHSRQASTDAGT. Phosphoserine occurs at positions 90 and 94. 2 positions are modified to phosphothreonine: Thr95 and Thr104. At Ser112 the chain carries Phosphoserine; by LATS1 and LATS2. Ser113 and Ser116 each carry phosphoserine. Residue Thr136 is modified to Phosphothreonine; by MAPK8 and MAPK9. Ser146 is modified (phosphoserine; by LATS1 and LATS2). WW domains follow at residues 153–186 and 212–245; these read VPLP…DPRK and GPLP…DPRL. The segment at 258–290 is disordered; that stretch reads SAPVKQPPPLAPQSPQGGVLGGGSSNQQQQIQL. 2 positions are modified to phosphoserine: Ser271 and Ser320. Residues 273–469 are transactivation domain; sequence QGGVLGGGSS…LDKESFLTWL (197 aa). A coiled-coil region spans residues 280–325; that stretch reads GSSNQQQQIQLQQLQMEKERLRLKQQELFRQELALRSQLPSLEQDG. Ser333 carries the post-translational modification Phosphoserine; by MAPK8 and MAPK9. Over residues 345–357 the composition is skewed to polar residues; it reads TNSSDPFLNSGTY. Residues 345 to 405 form a disordered region; that stretch reads TNSSDPFLNS…SQSTLPSQQS (61 aa). Phosphoserine occurs at positions 347, 348, and 354. Position 363 is a phosphoserine; by LATS1 and LATS2 (Ser363). Residues 365–375 are compositionally biased toward polar residues; it reads DSGLSMSSYSI. A phosphoserine; by CK1 mark is found at Ser366 and Ser369. Tyr373 is modified (phosphotyrosine; by ABL1). Thr378 is subject to Phosphothreonine; by MAPK8 and MAPK9. Residues 393 to 405 show a composition bias toward polar residues; that stretch reads DTISQSTLPSQQS.

This sequence belongs to the YAP1 family. As to quaternary structure, part of a complex when phosphorylated that contains DSG3, PKP1, YAP1 and YWHAG; the complex is required for localization of DSG3 and YAP1 to the cell membrane in keratinocytes. Binds to the SH3 domain of the YES kinase. Binds to WBP1 and WBP2. Binds, in vitro, through the WW1 domain, to neural isoforms of ENAH that contain the PPSY motif. The phosphorylated form interacts with YWHAB. Interacts (via WW domains) with LATS1 (via PPxY motif 2). Interacts with LATS2. Interacts (via WW domain 1) with ERBB4 (via PPxY motif 2). Interacts with TEAD1, TEAD2, TEAD3 and TEAD4. Interacts with TP73. Interacts with RUNX1. Interacts with HCK. Interacts (via WW domains) with PTPN14 (via PPxY motif 2); this interaction leads to the cytoplasmic sequestration of YAP1 and inhibits its transcriptional coactivator activity. Interacts (when phosphorylated at Ser-112) with SMAD2, SMAD3 and WWTR1. Interacts with PRRG2 (via cytoplasmic domain). Interacts (via WW domains) with PRRG4 (via cytoplasmic domain). Interacts (phosphorylated) with CLDN18; the interaction sequesters YAP1 away from the nucleus and thereby restricts transcription of YAP1 target genes. Interacts with SMAD1. Interacts with AMOT; the interaction facilitates translocation of YAP1 to the cytoplasm and tight junctions. Interacts with AMOTL2, the interaction is required for ubiquitination of AMOTL2 and localization of YAP1 to tight junctions. Post-translationally, phosphorylated by LATS1 and LATS2; leading to cytoplasmic translocation and inactivation. Phosphorylated by ABL1; leading to YAP1 stabilization, enhanced interaction with TP73 and recruitment onto proapoptotic genes; in response to DNA damage. Phosphorylation at Ser-366 and Ser-369 by CK1 is triggered by previous phosphorylation at Ser-363 by LATS proteins and leads to YAP1 ubiquitination by SCF(beta-TRCP) E3 ubiquitin ligase and subsequent degradation. Phosphorylated at Thr-104, Thr-136, Ser-333 and Thr-378 by MAPK8/JNK1 and MAPK9/JNK2, which is required for the regulation of apoptosis by YAP1. In terms of processing, lactylation by AARS1 promotes nuclear localization and stabilization of YAP1, leading to increased Hippo signaling pathway. Delactylated by SIRT1. Ubiquitinated by SCF(beta-TRCP) E3 ubiquitin ligase. As to expression, highly specific to cortical neurons.

It localises to the cytoplasm. Its subcellular location is the nucleus. It is found in the cell junction. The protein resides in the tight junction. The protein localises to the cell membrane. Its function is as follows. Transcriptional regulator with dual roles as a coactivator and corepressor. Critical downstream regulatory target in the Hippo signaling pathway, crucial for organ size control and tumor suppression by restricting proliferation and promoting apoptosis. The Hippo signaling pathway core involves a kinase cascade featuring STK3/MST2 and STK4/MST1, along with its regulatory partner SAV1, which phosphorylates and activates LATS1/2 in complex with their regulatory protein, MOB1. This activation leads to the phosphorylation and inactivation of the YAP1 oncoprotein and WWTR1/TAZ. Phosphorylation of YAP1 by LATS1/2 prevents its nuclear translocation, thereby regulating the expression of its target genes. The transcriptional regulation of gene expression requires TEAD transcription factors and modulates cell growth, anchorage-independent growth, and induction of epithelial-mesenchymal transition (EMT). Plays a key role in tissue tension and 3D tissue shape by regulating the cortical actomyosin network, acting via ARHGAP18, a Rho GTPase activating protein that suppresses F-actin polymerization. It also suppresses ciliogenesis by acting as a transcriptional corepressor of TEAD4 target genes AURKA and PLK1. In conjunction with WWTR1, regulates TGFB1-dependent SMAD2 and SMAD3 nuclear accumulation. Synergizes with WBP2 to enhance PGR activity. Functionally, attenuates p73-mediated cell death signaling in transcriptional repression-induced atypical death (TRIAD) of neurons. This is Transcriptional coactivator YAP1 (Yap1) from Rattus norvegicus (Rat).